The sequence spans 253 residues: uncharacterized protein (253 aa).

Ala2 carries the post-translational modification N-acetylalanine.

This sequence belongs to the NAD(P)-dependent epimerase/dehydratase family. As to quaternary structure, homodimer.

This is an uncharacterized protein from Arabidopsis thaliana (Mouse-ear cress).